A 228-amino-acid polypeptide reads, in one-letter code: Phosphatidylserine decarboxylase proenzyme (228 aa).

The active-site Schiff-base intermediate with substrate; via pyruvic acid is Ser197. Residue Ser197 is modified to Pyruvic acid (Ser); by autocatalysis.

Belongs to the phosphatidylserine decarboxylase family. PSD-A subfamily. As to quaternary structure, heterodimer of a large membrane-associated beta subunit and a small pyruvoyl-containing alpha subunit. Pyruvate serves as cofactor. In terms of processing, is synthesized initially as an inactive proenzyme. Formation of the active enzyme involves a self-maturation process in which the active site pyruvoyl group is generated from an internal serine residue via an autocatalytic post-translational modification. Two non-identical subunits are generated from the proenzyme in this reaction, and the pyruvate is formed at the N-terminus of the alpha chain, which is derived from the carboxyl end of the proenzyme. The post-translation cleavage follows an unusual pathway, termed non-hydrolytic serinolysis, in which the side chain hydroxyl group of the serine supplies its oxygen atom to form the C-terminus of the beta chain, while the remainder of the serine residue undergoes an oxidative deamination to produce ammonia and the pyruvoyl prosthetic group on the alpha chain.

The protein resides in the cell membrane. The enzyme catalyses a 1,2-diacyl-sn-glycero-3-phospho-L-serine + H(+) = a 1,2-diacyl-sn-glycero-3-phosphoethanolamine + CO2. Its pathway is phospholipid metabolism; phosphatidylethanolamine biosynthesis; phosphatidylethanolamine from CDP-diacylglycerol: step 2/2. Its function is as follows. Catalyzes the formation of phosphatidylethanolamine (PtdEtn) from phosphatidylserine (PtdSer). This is Phosphatidylserine decarboxylase proenzyme from Bacteroides fragilis (strain ATCC 25285 / DSM 2151 / CCUG 4856 / JCM 11019 / LMG 10263 / NCTC 9343 / Onslow / VPI 2553 / EN-2).